A 283-amino-acid chain; its full sequence is Peroxisomal protein 2 (283 aa).

Positions 281-283 (VKL) match the Peroxisomal target signal 1 (PTS1) motif.

This sequence belongs to the PXP2 family.

Its subcellular location is the peroxisome matrix. The protein resides in the cytoplasm. It localises to the cytosol. Functionally, probably involved in peroxisome formation or maintenance as well as in amino acid metabolism. The polypeptide is Peroxisomal protein 2 (Saccharomyces cerevisiae (strain ATCC 204508 / S288c) (Baker's yeast)).